Consider the following 131-residue polypeptide: DNA-directed RNA polymerase subunit Rpo8 (131 aa).

This sequence belongs to the archaeal Rpo8 RNA polymerase subunit family. Part of the 13-subunit RNA polymerase complex. Interacts with Rpo1N on the periphery of the clamp head.

It localises to the cytoplasm. The catalysed reaction is RNA(n) + a ribonucleoside 5'-triphosphate = RNA(n+1) + diphosphate. In terms of biological role, DNA-dependent RNA polymerase (RNAP) catalyzes the transcription of DNA into RNA using the four ribonucleoside triphosphates as substrates. The sequence is that of DNA-directed RNA polymerase subunit Rpo8 from Saccharolobus shibatae (strain ATCC 51178 / DSM 5389 / JCM 8931 / NBRC 15437 / B12) (Sulfolobus shibatae).